Consider the following 257-residue polypeptide: Phosphonates import ATP-binding protein PhnC (257 aa).

Residues 4–248 form the ABC transporter domain; the sequence is IEFKDVSKVY…VFNHIYGRSI (245 aa).

This sequence belongs to the ABC transporter superfamily. Phosphonates importer (TC 3.A.1.9.1) family. The complex is composed of two ATP-binding proteins (PhnC), two transmembrane proteins (PhnE) and a solute-binding protein (PhnD).

Its subcellular location is the cell membrane. It catalyses the reaction phosphonate(out) + ATP + H2O = phosphonate(in) + ADP + phosphate + H(+). Its function is as follows. Part of the ABC transporter complex PhnCDE involved in phosphonates import. Responsible for energy coupling to the transport system. In Staphylococcus epidermidis (strain ATCC 35984 / DSM 28319 / BCRC 17069 / CCUG 31568 / BM 3577 / RP62A), this protein is Phosphonates import ATP-binding protein PhnC.